Reading from the N-terminus, the 422-residue chain is 4-hydroxy-3-methylbut-2-en-1-yl diphosphate synthase (flavodoxin) (422 aa).

[4Fe-4S] cluster is bound by residues Cys-316, Cys-319, Cys-362, and Glu-369.

It belongs to the IspG family. Requires [4Fe-4S] cluster as cofactor.

The enzyme catalyses (2E)-4-hydroxy-3-methylbut-2-enyl diphosphate + oxidized [flavodoxin] + H2O + 2 H(+) = 2-C-methyl-D-erythritol 2,4-cyclic diphosphate + reduced [flavodoxin]. It participates in isoprenoid biosynthesis; isopentenyl diphosphate biosynthesis via DXP pathway; isopentenyl diphosphate from 1-deoxy-D-xylulose 5-phosphate: step 5/6. Functionally, converts 2C-methyl-D-erythritol 2,4-cyclodiphosphate (ME-2,4cPP) into 1-hydroxy-2-methyl-2-(E)-butenyl 4-diphosphate. The sequence is that of 4-hydroxy-3-methylbut-2-en-1-yl diphosphate synthase (flavodoxin) from Ehrlichia canis (strain Jake).